A 339-amino-acid chain; its full sequence is Anthranilate phosphoribosyltransferase (339 aa).

5-phospho-alpha-D-ribose 1-diphosphate is bound by residues glycine 81, glycine 84–aspartate 85, serine 89, asparagine 91–serine 94, lysine 109–serine 117, and alanine 121. Glycine 81 contributes to the anthranilate binding site. A Mg(2+)-binding site is contributed by serine 93. Asparagine 112 provides a ligand contact to anthranilate. Arginine 167 serves as a coordination point for anthranilate. The Mg(2+) site is built by aspartate 225 and glutamate 226.

The protein belongs to the anthranilate phosphoribosyltransferase family. Homodimer. The cofactor is Mg(2+).

The catalysed reaction is N-(5-phospho-beta-D-ribosyl)anthranilate + diphosphate = 5-phospho-alpha-D-ribose 1-diphosphate + anthranilate. It participates in amino-acid biosynthesis; L-tryptophan biosynthesis; L-tryptophan from chorismate: step 2/5. Functionally, catalyzes the transfer of the phosphoribosyl group of 5-phosphorylribose-1-pyrophosphate (PRPP) to anthranilate to yield N-(5'-phosphoribosyl)-anthranilate (PRA). This Brucella canis (strain ATCC 23365 / NCTC 10854 / RM-666) protein is Anthranilate phosphoribosyltransferase.